Here is a 100-residue protein sequence, read N- to C-terminus: Urease subunit gamma (100 aa).

It belongs to the urease gamma subunit family. In terms of assembly, heterotrimer of UreA (gamma), UreB (beta) and UreC (alpha) subunits. Three heterotrimers associate to form the active enzyme.

It localises to the cytoplasm. The enzyme catalyses urea + 2 H2O + H(+) = hydrogencarbonate + 2 NH4(+). It participates in nitrogen metabolism; urea degradation; CO(2) and NH(3) from urea (urease route): step 1/1. In Rhizobium rhizogenes (strain K84 / ATCC BAA-868) (Agrobacterium radiobacter), this protein is Urease subunit gamma.